A 450-amino-acid chain; its full sequence is Adenylosuccinate lyase (450 aa).

N(6)-(1,2-dicarboxyethyl)-AMP-binding positions include 9 to 10 (RY), 75 to 77 (HHD), and 101 to 102 (TS). H149 serves as the catalytic Proton donor/acceptor. Q223 lines the N(6)-(1,2-dicarboxyethyl)-AMP pocket. S273 acts as the Proton donor/acceptor in catalysis. N(6)-(1,2-dicarboxyethyl)-AMP is bound by residues S274, 279–281 (KRN), and 318–322 (SVERV).

It belongs to the lyase 1 family. Adenylosuccinate lyase subfamily. In terms of assembly, homotetramer. Residues from neighboring subunits contribute catalytic and substrate-binding residues to each active site.

It catalyses the reaction N(6)-(1,2-dicarboxyethyl)-AMP = fumarate + AMP. The catalysed reaction is (2S)-2-[5-amino-1-(5-phospho-beta-D-ribosyl)imidazole-4-carboxamido]succinate = 5-amino-1-(5-phospho-beta-D-ribosyl)imidazole-4-carboxamide + fumarate. The protein operates within purine metabolism; AMP biosynthesis via de novo pathway; AMP from IMP: step 2/2. It participates in purine metabolism; IMP biosynthesis via de novo pathway; 5-amino-1-(5-phospho-D-ribosyl)imidazole-4-carboxamide from 5-amino-1-(5-phospho-D-ribosyl)imidazole-4-carboxylate: step 2/2. In terms of biological role, catalyzes two reactions in de novo purine nucleotide biosynthesis. Catalyzes the breakdown of 5-aminoimidazole- (N-succinylocarboxamide) ribotide (SAICAR or 2-[5-amino-1-(5-phospho-beta-D-ribosyl)imidazole-4-carboxamido]succinate) to 5-aminoimidazole-4-carboxamide ribotide (AICAR or 5-amino-1-(5-phospho-beta-D-ribosyl)imidazole-4-carboxamide) and fumarate, and of adenylosuccinate (ADS or N(6)-(1,2-dicarboxyethyl)-AMP) to adenosine monophosphate (AMP) and fumarate. This Pyrococcus horikoshii (strain ATCC 700860 / DSM 12428 / JCM 9974 / NBRC 100139 / OT-3) protein is Adenylosuccinate lyase (purB).